We begin with the raw amino-acid sequence, 612 residues long: Chaperone protein DnaK (612 aa).

Residue threonine 174 is modified to Phosphothreonine; by autocatalysis. The disordered stretch occupies residues 578-612 (GGQTGGATNTDSAGQGTTQDNVYEANYKVEDDDNK). A compositionally biased stretch (polar residues) spans 586–598 (NTDSAGQGTTQDN).

It belongs to the heat shock protein 70 family.

In terms of biological role, acts as a chaperone. In Thermoanaerobacter sp. (strain X514), this protein is Chaperone protein DnaK.